A 196-amino-acid polypeptide reads, in one-letter code: Secreted effector protein SseB (196 aa).

This sequence belongs to the EspA/SseB family. As to quaternary structure, may form a complex with SseC and SseD. Binds to the chaperone SseA.

Its subcellular location is the secreted. It localises to the cell surface. Functionally, effector proteins function to alter host cell physiology and promote bacterial survival in host tissues. May act as a translocator that mediates translocation of SPI-2 T3SS effector proteins from intraphagosomal bacterial cells into the host cells. SseB is required for correct localization of SseC and SseD on the bacterial cell surface. The protein is Secreted effector protein SseB (sseB) of Salmonella typhimurium (strain LT2 / SGSC1412 / ATCC 700720).